The primary structure comprises 752 residues: Probable cell surface ferric reductase kap2 (752 aa).

A helical membrane pass occupies residues 40–60 (GKYGLGWVYFSVILLAISTII). Residues Asn118 and Asn133 are each glycosylated (N-linked (GlcNAc...) asparagine). The next 2 membrane-spanning stretches (helical) occupy residues 157–177 (IGFPSLGASSIILAALIFVTL) and 195–215 (PPLAIRAGMIAVAMIPWIIAL). The region spanning 201–348 (AGMIAVAMIP…WATVAIWMLS (148 aa)) is the Ferric oxidoreductase domain. 2 residues coordinate heme: His237 and His251. Helical transmembrane passes span 241–261 (GYLCLFLSLIHMVPFYVTPIW), 281–301 (GTGWAALVPLIVLCLHSLPIL), and 306–326 (YELFKLVHLPLSIIFLAMIFW). 2 residues coordinate heme: His313 and His327. A helical membrane pass occupies residues 331-351 (FLASWDYLWATVAIWMLSYAV). An FAD-binding FR-type domain is found at 349–475 (YAVRLFYVNW…EGPYGGMKRD (127 aa)). N-linked (GlcNAc...) asparagine glycosylation occurs at Asn357. Residue 467 to 470 (GPYG) participates in NADP(+) binding. Residues 482–502 (VVFFAGGSGITATASHLLNLI) traverse the membrane as a helical segment. Asn627 carries an N-linked (GlcNAc...) asparagine glycan. 714–715 (CG) is a binding site for NADP(+).

The protein belongs to the ferric reductase (FRE) family. FAD serves as cofactor. The cofactor is heme.

The protein localises to the cell membrane. The catalysed reaction is 2 a Fe(II)-siderophore + NADP(+) + H(+) = 2 a Fe(III)-siderophore + NADPH. Probable cell surface ferric reductase that acts as a negative regulatory factor of growth and development. Involved in kojic acid production through the regulation of kojA expression. The chain is Probable cell surface ferric reductase kap2 from Aspergillus oryzae (strain ATCC 42149 / RIB 40) (Yellow koji mold).